The following is a 279-amino-acid chain: Tryptophan 2,3-dioxygenase (279 aa).

Substrate is bound by residues 48–52 (FIVIH), Tyr-110, and Arg-114. His-237 is a heme binding site. Thr-251 contributes to the substrate binding site.

The protein belongs to the tryptophan 2,3-dioxygenase family. In terms of assembly, homotetramer. Heme serves as cofactor.

It carries out the reaction L-tryptophan + O2 = N-formyl-L-kynurenine. It participates in amino-acid degradation; L-tryptophan degradation via kynurenine pathway; L-kynurenine from L-tryptophan: step 1/2. Its function is as follows. Heme-dependent dioxygenase that catalyzes the oxidative cleavage of the L-tryptophan (L-Trp) pyrrole ring and converts L-tryptophan to N-formyl-L-kynurenine. Catalyzes the oxidative cleavage of the indole moiety. This is Tryptophan 2,3-dioxygenase from Bacillus anthracis.